The sequence spans 154 residues: Large ribosomal subunit protein uL13 (154 aa).

This sequence belongs to the universal ribosomal protein uL13 family. In terms of assembly, part of the 50S ribosomal subunit.

Functionally, this protein is one of the early assembly proteins of the 50S ribosomal subunit, although it is not seen to bind rRNA by itself. It is important during the early stages of 50S assembly. This is Large ribosomal subunit protein uL13 from Rhodopseudomonas palustris (strain ATCC BAA-98 / CGA009).